The sequence spans 765 residues: Polyadenylate-binding protein, cytoplasmic and nuclear (765 aa).

Residues 1-37 show a composition bias toward low complexity; it reads MSADASTTPAADSNVTSTPETSTTPAAPAPEVTAVES. Residues 1 to 49 form a disordered region; it reads MSADASTTPAADSNVTSTPETSTTPAAPAPEVTAVESTTAPNASQPHSA. The span at 38–48 shows a compositional bias: polar residues; it reads TTAPNASQPHS. 4 RRM domains span residues 49-127, 137-214, 230-307, and 333-470; these read ASLY…WSQR, GNVF…HHIS, TNVY…RAQK, and VNLY…LAQR. Disordered stretches follow at residues 364-427 and 619-657; these read VMRD…ADKK and PGYGQGRGGVPVQQGQMRPGQGGRGQNAAQAPAGRPEEA. Over residues 377–427 the composition is skewed to basic and acidic residues; sequence ESDKEKENKEATKENEKESSEAEKAEKTEEKPADSGDEKKEDKESKKADKK. Residues 628–637 are compositionally biased toward low complexity; that stretch reads VPVQQGQMRP. The PABC domain occupies 659-736; the sequence is AGGLTAQALS…ALNVYDEYMK (78 aa). The disordered stretch occupies residues 737-765; that stretch reads NKGGESEATGEAAKPKEAAKETSTEENKS. Residues 749–765 are compositionally biased toward basic and acidic residues; the sequence is AKPKEAAKETSTEENKS.

It belongs to the polyadenylate-binding protein type-1 family.

It is found in the cytoplasm. Its subcellular location is the nucleus. Binds the poly(A) tail of mRNA. Appears to be an important mediator of the multiple roles of the poly(A) tail in mRNA biogenesis, stability and translation. In the nucleus, involved in both mRNA cleavage and polyadenylation. Is also required for efficient mRNA export to the cytoplasm. Acts in concert with a poly(A)-specific nuclease (PAN) to affect poly(A) tail shortening, which may occur concomitantly with either nucleocytoplasmic mRNA transport or translational initiation. In the cytoplasm, stimulates translation initiation and regulates mRNA decay through translation termination-coupled poly(A) shortening, probably mediated by PAN. This Aspergillus oryzae (strain ATCC 42149 / RIB 40) (Yellow koji mold) protein is Polyadenylate-binding protein, cytoplasmic and nuclear (pab1).